A 900-amino-acid polypeptide reads, in one-letter code: Suppressor of activated egl-4 protein 1 (900 aa).

Disordered regions lie at residues 1–75 (MPPP…HLPT), 340–380 (PVAE…SRKN), and 406–425 (WASTSSADEKMQTERKESLE). A compositionally biased stretch (polar residues) spans 53–75 (ASGQQHRPSIMSGQSHQNNHLPT). 2 stretches are compositionally biased toward basic and acidic residues: residues 358–377 (GDMKHLMNGKKRSEDGDGPS) and 412–425 (ADEKMQTERKESLE). The region spanning 451 to 544 (PHINLGKNYQ…AAVEDLLRSD (94 aa)) is the ELM2 domain. The SANT domain maps to 560-611 (NDSVLWTPDEIYQFQDAIYQSEKDFDKVAVELPGKSVKECVQFYYTWKKDCP). The disordered stretch occupies residues 710–729 (PTAPRAHHTPSASASKKGAQ). The C2H2-type zinc-finger motif lies at 736-758 (FHCRLCDKCFEKVKSLNAHMKSH).

As to quaternary structure, may be a component of a histone deacetylase complex containing saeg-2, saeg-1 and hda-2. May interact with egl-4. Ubiquitously expressed.

It localises to the nucleus. As a likely component of a histone deacetylase complex, together with saeg-2 and hda-2, functions downstream of the cAMP-dependent kinase egl-4 to regulate the expression of genes required for egg-laying and foraging. The chain is Suppressor of activated egl-4 protein 1 from Caenorhabditis elegans.